The chain runs to 297 residues: Glycerol-3-phosphate dehydrogenase [NAD(P)+] (297 aa).

Residues Trp11, Arg30, and Lys79 each contribute to the NADPH site. Lys79, Gly107, and Ser109 together coordinate sn-glycerol 3-phosphate. Ala111 is a binding site for NADPH. The sn-glycerol 3-phosphate site is built by Lys161, Asp214, Ser224, Arg225, and Asn226. Lys161 functions as the Proton acceptor in the catalytic mechanism. Residue Arg225 participates in NADPH binding. NADPH contacts are provided by Val249 and Glu251.

The protein belongs to the NAD-dependent glycerol-3-phosphate dehydrogenase family.

The protein localises to the cytoplasm. The enzyme catalyses sn-glycerol 3-phosphate + NAD(+) = dihydroxyacetone phosphate + NADH + H(+). It carries out the reaction sn-glycerol 3-phosphate + NADP(+) = dihydroxyacetone phosphate + NADPH + H(+). It functions in the pathway membrane lipid metabolism; glycerophospholipid metabolism. In terms of biological role, catalyzes the reduction of the glycolytic intermediate dihydroxyacetone phosphate (DHAP) to sn-glycerol 3-phosphate (G3P), the key precursor for phospholipid synthesis. The polypeptide is Glycerol-3-phosphate dehydrogenase [NAD(P)+] (Wolinella succinogenes (strain ATCC 29543 / DSM 1740 / CCUG 13145 / JCM 31913 / LMG 7466 / NCTC 11488 / FDC 602W) (Vibrio succinogenes)).